We begin with the raw amino-acid sequence, 260 residues long: Taurine import ATP-binding protein TauB (260 aa).

Positions 6 to 235 (AHQVSVVYAS…RYAAGESMRS (230 aa)) constitute an ABC transporter domain. Residue 40–47 (GASGCGKS) participates in ATP binding.

The protein belongs to the ABC transporter superfamily. Taurine importer (TC 3.A.1.17.1) family. As to quaternary structure, the complex is composed of two ATP-binding proteins (TauB), two transmembrane proteins (TauC) and a solute-binding protein (TauA).

It localises to the cell inner membrane. The enzyme catalyses taurine(out) + ATP + H2O = taurine(in) + ADP + phosphate + H(+). Its function is as follows. Part of the ABC transporter complex TauABC involved in taurine import. Responsible for energy coupling to the transport system. This chain is Taurine import ATP-binding protein TauB, found in Burkholderia thailandensis (strain ATCC 700388 / DSM 13276 / CCUG 48851 / CIP 106301 / E264).